Consider the following 752-residue polypeptide: Primary amine oxidase (752 aa).

Residues 1–27 form the signal peptide; the sequence is MAILSPRKTALALAVALSCAWQSPAFA. Substrate-binding positions include 408–419 and 490–495; these read YLDSGDYGMGTL and VGNYDY. The Proton acceptor role is filled by Asp-410. Residue Tyr-493 is the Schiff-base intermediate with substrate; via topaquinone of the active site. At Tyr-493 the chain carries 2',4',5'-topaquinone. Cu cation contacts are provided by His-551 and His-553. Positions 560, 561, 562, 600, 694, 697, 699, and 705 each coordinate Ca(2+). Asp-560 contributes to the Mn(2+) binding site. Asp-562 provides a ligand contact to Mn(2+). Asp-705 contributes to the Mn(2+) binding site. His-716 serves as a coordination point for Cu cation.

It belongs to the copper/topaquinone oxidase family. In terms of assembly, homodimer. Cu cation serves as cofactor. It depends on Ca(2+) as a cofactor. The cofactor is L-topaquinone. Mn(2+) is required as a cofactor. In terms of processing, topaquinone (TPQ) is generated by copper-dependent autoxidation of a specific tyrosyl residue.

The protein resides in the periplasm. The catalysed reaction is a primary methyl amine + O2 + H2O = an aldehyde + H2O2 + NH4(+). In terms of biological role, active on tyramine, tryptamine, beta-phenethylamine and dopamine. This Klebsiella michiganensis (strain ATCC 8724 / DSM 4798 / JCM 20051 / NBRC 3318 / NRRL B-199 / KCTC 1686 / BUCSAV 143 / CCM 1901) protein is Primary amine oxidase (maoA).